The chain runs to 140 residues: Putative transmembrane protein 49 (140 aa).

2 helical membrane-spanning segments follow: residues Leu23–Val43 and Ile93–Tyr110.

It localises to the host membrane. The sequence is that of Putative transmembrane protein 49 (SIFV0049) from Saccharolobus islandicus (Sulfolobus islandicus).